We begin with the raw amino-acid sequence, 65 residues long: Conotoxin tx3c (65 aa).

A signal peptide spans 1–19; sequence MFKLGVLLTICLLLFSLNA. Positions 20–50 are excised as a propeptide; the sequence is VPLDGDQPADQPAERLLDDISFENNPFYDPA. 3 disulfide bridges follow: C53-C64, C54-C60, and C57-C63. P62 is modified (4-hydroxyproline; partial). At C64 the chain carries Cysteine amide.

In terms of processing, the hydroxylation at Pro-62 is observed in PubMed:15924437, PubMed:19380747 and PubMed:22709442, and the non-hydroxylation is described in PubMed:22709442. Expressed by the venom duct.

The protein resides in the secreted. Functionally, causes scratching in mice. The chain is Conotoxin tx3c from Conus textile (Cloth-of-gold cone).